A 185-amino-acid polypeptide reads, in one-letter code: Ribosome-recycling factor (185 aa).

Belongs to the RRF family.

It localises to the cytoplasm. Functionally, responsible for the release of ribosomes from messenger RNA at the termination of protein biosynthesis. May increase the efficiency of translation by recycling ribosomes from one round of translation to another. This Streptococcus pneumoniae (strain P1031) protein is Ribosome-recycling factor.